A 57-amino-acid chain; its full sequence is Large ribosomal subunit protein bL32 (57 aa).

A disordered region spans residues 1-37; that stretch reads MAVQQNKPTRSKRGMRRSHDALTAVTSLSVDKTSGEK.

This sequence belongs to the bacterial ribosomal protein bL32 family.

This chain is Large ribosomal subunit protein bL32, found in Escherichia fergusonii (strain ATCC 35469 / DSM 13698 / CCUG 18766 / IAM 14443 / JCM 21226 / LMG 7866 / NBRC 102419 / NCTC 12128 / CDC 0568-73).